Reading from the N-terminus, the 789-residue chain is Tax1-binding protein 1 (789 aa).

A phosphoserine mark is found at Ser124, Ser138, and Ser225. Residues 144-599 adopt a coiled-coil conformation; sequence TTKAGLLELK…LKRSLENPAE (456 aa). The oligomerization stretch occupies residues 320–420; sequence EEIGRLQLCL…ELKLNAMKKD (101 aa). Residues 481 to 502 are compositionally biased toward polar residues; the sequence is TGNQQKVNDASVNTDPATSAST. A disordered region spans residues 481–508; that stretch reads TGNQQKVNDASVNTDPATSASTVDVKPS. The residue at position 593 (Ser593) is a Phosphoserine; by IKKA. Ser609 carries the phosphoserine modification. Positions 639–660 are disordered; sequence YASQETRDGADGAFYPDEIQRP. At Ser666 the chain carries Phosphoserine; by IKKA. Residues 678 to 712 form a disordered region; sequence PARNFSRPDGLEDSEDSKEDENVPTAPDPPSQHLR. UBZ1-type zinc fingers lie at residues 727–753 and 754–780; these read HKKC…VESH and WKVC…VQTH. Residues Cys730, Cys733, His749, His753, Cys757, Cys760, His776, and His780 each coordinate Zn(2+).

In terms of assembly, homooligomer. Interacts with TNFAIP3. Interacts with STARD13. Interacts with MYO6. Interacts with TOM1; the interaction is indirect and is mediated by MYO6, which acts as a bridge between TOM1 and TAX1BP1. Interacts with MAVS; this interaction induces MAVS polyubiquitination. Interacts with TNIP1. Interacts with TRAF6; this interaction mediates deubiquitination of TRAF6 and inhibition of NF-kappa-B activation. Interacts with RIPK1; this interaction negatively regulates RIPK1 ubiquitination. Interacts with NBR1. Interacts with TBK1. Interacts with RB1CC1. Interacts with SQSTM1. Interacts with AZI2. Interacts with TICAM1 and TRIM32; these interactions target TICAM1 to TAX1BP1-mediated selective autophagic degradation. (Microbial infection) Interacts with the HTLV-1 protein Tax. As to quaternary structure, (Microbial infection) Interacts with Respiratory syncytial virus protein N; this interaction may promote viral growth by inhibiting the innate immune response. In terms of assembly, (Microbial infection) Interacts with Lassa virus protein Z. (Microbial infection) Interacts with Mopeia virus protein Z. Post-translationally, phosphorylated in the C-terminal region by CHUK/IKKA leading to NF-kappa-B signaling down-regulation. Expressed in all tissues tested.

Its subcellular location is the cytoplasm. The protein resides in the mitochondrion. It is found in the preautophagosomal structure. The protein localises to the cytoplasmic vesicle. It localises to the autophagosome. Ubiquitin-binding adapter that participates in inflammatory, antiviral and innate immune processes as well as selective autophagy regulation. Plays a key role in the negative regulation of NF-kappa-B and IRF3 signalings by acting as an adapter for the ubiquitin-editing enzyme A20/TNFAIP3 to bind and inactivate its substrates. Disrupts the interactions between the E3 ubiquitin ligase TRAF3 and TBK1/IKBKE to attenuate 'Lys63'-linked polyubiquitination of TBK1 and thereby IFN-beta production. Also recruits A20/TNFAIP3 to ubiquitinated signaling proteins TRAF6 and RIPK1, leading to their deubiquitination and disruption of IL-1 and TNF-induced NF-kappa-B signaling pathways. Inhibits virus-induced apoptosis by inducing the 'Lys-48'-linked polyubiquitination and degradation of MAVS via recruitment of the E3 ligase ITCH, thereby attenuating MAVS-mediated apoptosis signaling. As a macroautophagy/autophagy receptor, facilitates the xenophagic clearance of pathogenic bacteria such as Salmonella typhimurium and Mycobacterium tuberculosis. Upon NBR1 recruitment to the SQSTM1-ubiquitin condensates, acts as the major recruiter of RB1CC1 to these ubiquitin condensates to promote their autophagic degradation. Mediates the autophagic degradation of other substrates including TICAM1. The protein is Tax1-binding protein 1 (TAX1BP1) of Homo sapiens (Human).